An 841-amino-acid chain; its full sequence is Transcription regulator protein BACH2 (841 aa).

The region spanning 37–103 (CDVTLIVERK…AYTAKLLLSR (67 aa)) is the BTB domain. 3 disordered regions span residues 153–173 (HEDC…TMDS), 204–226 (EALL…DALT), and 246–329 (SSHS…AACL). Residues 160-172 (AGEEEDEEEETMD) are compositionally biased toward acidic residues. Composition is skewed to basic and acidic residues over residues 214–224 (TDTKESSEKDA) and 298–313 (PDAK…DRKQ). S315 bears the Phosphoserine mark. Glycyl lysine isopeptide (Lys-Gly) (interchain with G-Cter in SUMO2) cross-links involve residues K382 and K421. A Phosphoserine; by RPS6KB1 modification is found at S521. The disordered stretch occupies residues 583-610 (QSYGTNSSDESGSFSEADSESCPVQDRG). Polar residues predominate over residues 584 to 598 (SYGTNSSDESGSFSE). The 64-residue stretch at 646 to 709 (FIHDVRRRSK…GELLDNFSCL (64 aa)) folds into the bZIP domain. The tract at residues 651 to 667 (RRRSKNRIAAQRCRKRK) is basic motif. The leucine-zipper stretch occupies residues 671-678 (IQNLECEI). The interval 777–816 (PGPPWAPSNTSENCTSGRRLEGTDPGTFSERGPPLEPRSQ) is disordered. A Nuclear export signal motif is present at residues 821–841 (DFCQEMTDKCTTDEQPRKDYT).

This sequence belongs to the bZIP family. CNC subfamily. In terms of assembly, homodimer; disulfide-linked. Heterodimer of BACH2 and Maf-related transcription factors. Phosphorylation at Ser-521 downstream of the PI-3K pathway promotes nuclear export. Post-translationally, the reversible disulfide bond may provide a mechanism to regulate the activity in oxidative stress responses. In terms of tissue distribution, B-cell specific.

It is found in the cytoplasm. The protein localises to the nucleus. In terms of biological role, transcriptional regulator that acts as a repressor or activator. Binds to Maf recognition elements (MARE). Plays an important role in coordinating transcription activation and repression by MAFK. Induces apoptosis in response to oxidative stress through repression of the antiapoptotic factor HMOX1. Positively regulates the nuclear import of actin. Is a key regulator of adaptive immunity, crucial for the maintenance of regulatory T-cell function and B-cell maturation. The chain is Transcription regulator protein BACH2 (BACH2) from Homo sapiens (Human).